A 183-amino-acid polypeptide reads, in one-letter code: Integrase-like protein y4lS (183 aa).

The Resolvase/invertase-type recombinase catalytic domain maps to 2-136 (ARIGYARTFT…EGIAAARKRG (135 aa)).

This sequence belongs to the site-specific recombinase resolvase family.

This chain is Integrase-like protein y4lS, found in Sinorhizobium fredii (strain NBRC 101917 / NGR234).